Reading from the N-terminus, the 233-residue chain is Esterase FUS5 (233 aa).

Residues S105, D159, and H187 each act as charge relay system in the active site.

This sequence belongs to the LovG family.

Functionally, esterase; part of the gene cluster that mediates the biosynthesis of the mycotoxin fusarin C. Within the cluster, FUS1, FUS2, FUS8 and FUS9 are sufficient for fusarin production. The other FUS cluster members are not essential for fusarin C biosynthesis. This is Esterase FUS5 from Gibberella fujikuroi (strain CBS 195.34 / IMI 58289 / NRRL A-6831) (Bakanae and foot rot disease fungus).